Reading from the N-terminus, the 74-residue chain is Small ribosomal subunit protein bS18 (74 aa).

It belongs to the bacterial ribosomal protein bS18 family. In terms of assembly, part of the 30S ribosomal subunit. Forms a tight heterodimer with protein bS6.

Its function is as follows. Binds as a heterodimer with protein bS6 to the central domain of the 16S rRNA, where it helps stabilize the platform of the 30S subunit. The sequence is that of Small ribosomal subunit protein bS18 from Natranaerobius thermophilus (strain ATCC BAA-1301 / DSM 18059 / JW/NM-WN-LF).